A 1183-amino-acid chain; its full sequence is LRR receptor-like serine/threonine-protein kinase FLS2 (1183 aa).

The signal sequence occupies residues 1 to 41 (MERNKFASKMSQHYTKTICIAVVLVAVLFSLSSAAAAGSGA). At 42–809 (AVSVQLEALL…GKKRVFSRTG (768 aa)) the chain is on the extracellular side. Cys87 and Cys94 are oxidised to a cystine. Residues Asn88 and Asn120 are each glycosylated (N-linked (GlcNAc...) asparagine). 13 LRR repeats span residues 97-120 (AGQVTSIQLPESKLRGALSPFLGN), 121-145 (ISTLQVIDLTSNAFAGGIPPQLGRL), 147-169 (ELEQLVVSSNYFAGGIPSSLCNC), 171-193 (AMWALALNVNNLTGAIPSCIGDL), 194-217 (SNLEIFEAYLNNLDGELPPSMAKL), 218-241 (KGIMVVDLSCNQLSGSIPPEIGDL), 242-265 (SNLQILQLYENRFSGHIPRELGRC), 267-289 (NLTLLNIFSNGFTGEIPGELGEL), 290-313 (TNLEVMRLYKNALTSEIPRSLRRC), 315-337 (SLLNLDLSMNQLAGPIPPELGEL), 338-361 (PSLQRLSLHANRLAGTVPASLTNL), 363-385 (NLTILELSENHLSGPLPASIGSL), and 386-409 (RNLRRLIVQNNSLSGQIPASISNC). Cysteines 167 and 189 form a disulfide. 2 N-linked (GlcNAc...) asparagine glycosylation sites follow: Asn168 and Asn181. N-linked (GlcNAc...) asparagine glycosylation is present at Asn267. Residues Asn363, Asn395, Asn408, and Asn414 are each glycosylated (N-linked (GlcNAc...) asparagine). LRR repeat units follow at residues 433–457 (LQSLMFLSLGQNSLAGDIPDDLFDC), 459–480 (QLQKLDLSENSFTGGLSRLVGQ), 481–505 (LGNLTVLQLQGNALSGEIPEEIGNM), 507–529 (KLISLKLGRNRFAGHVPASISNM), 530–553 (SSLQLLDLGHNRLDGVFPAEVFEL), 555–577 (QLTILGAGSNRFAGPIPDAVANL), 578–600 (RSLSFLDLSSNMLNGTVPAALGR), 601–625 (LDQLLTLDLSHNRLAGAIPGAVIAS), 627–651 (SNVQMYLNLSNNAFTGAIPAEIGGL), 652–675 (VMVQTIDLSNNQLSGGVPATLAGC), 676–699 (KNLYSLDLSGNSLTGELPANLFPQ), 701–724 (DLLTTLNISGNDLDGEIPADIAAL), 725–748 (KHIQTLDVSRNAFAGAIPPALANL), and 749–773 (TALRSLNLSSNTFEGPVPDGGVFRN). N-linked (GlcNAc...) asparagine glycans are attached at residues Asn483, Asn504, and Asn528. An N-linked (GlcNAc...) asparagine glycan is attached at Asn591. Asn634 carries N-linked (GlcNAc...) asparagine glycosylation. N-linked (GlcNAc...) asparagine glycans are attached at residues Asn707, Asn747, Asn755, and Asn773. Residues 810–830 (LVILVVLIALSTLLLLMVATI) form a helical membrane-spanning segment. At 831 to 1183 (LLVSYRRYRR…LKMSKLVGED (353 aa)) the chain is on the cytoplasmic side. In terms of domain architecture, Protein kinase spans 876–1179 (FDQGNVIGSS…LSSLLKMSKL (304 aa)). ATP is bound by residues 882–890 (IGSSNLSTV) and Lys908. Asp1013 functions as the Proton acceptor in the catalytic mechanism.

This sequence belongs to the protein kinase superfamily. Ser/Thr protein kinase family. As to quaternary structure, interacts with SERK2.

The protein localises to the cell membrane. It carries out the reaction L-seryl-[protein] + ATP = O-phospho-L-seryl-[protein] + ADP + H(+). The catalysed reaction is L-threonyl-[protein] + ATP = O-phospho-L-threonyl-[protein] + ADP + H(+). Functionally, constitutes the pattern-recognition receptor (PPR) that determines the specific perception of flagellin (flg22), a potent elicitor of the defense response to pathogen-associated molecular patterns (PAMPs). Recognizes flg22 from Pseudomonas aeruginosa and Acidovorax avenae. flg22 is a peptide derived from the bacterial flagellin N-terminus sequence. Does not recognize flg22 from Xanthomonas oryzae pv. oryzae (Xoo) or Xanthomonas oryzae pv. oryzicola (Xoc). The sequence is that of LRR receptor-like serine/threonine-protein kinase FLS2 from Oryza sativa subsp. japonica (Rice).